A 222-amino-acid chain; its full sequence is GTP cyclohydrolase 1 (222 aa).

Residues Cys-111, His-114, and Cys-182 each coordinate Zn(2+).

It belongs to the GTP cyclohydrolase I family. As to quaternary structure, homomer.

It catalyses the reaction GTP + H2O = 7,8-dihydroneopterin 3'-triphosphate + formate + H(+). It participates in cofactor biosynthesis; 7,8-dihydroneopterin triphosphate biosynthesis; 7,8-dihydroneopterin triphosphate from GTP: step 1/1. The chain is GTP cyclohydrolase 1 from Klebsiella pneumoniae (strain 342).